A 95-amino-acid polypeptide reads, in one-letter code: Histone-like DNA-binding protein (95 aa).

The protein belongs to the bacterial histone-like protein family.

In Rickettsia typhi (strain ATCC VR-144 / Wilmington), this protein is Histone-like DNA-binding protein.